We begin with the raw amino-acid sequence, 368 residues long: MWRMSYFWHEPYWLPRNVTWPEVPAKFVDLLVPIYLAIPLVIIRILWESTIGVTYLYFRTNAYASRKNITLLGCMWEHMTGGFASVSRAKKILECFWRFSYYTFAFLYGLYVMKNSSWLYDVKQCWIGYPFHPVPDTIWWYYMIETGFYYSLLIGSTFDVRRSDFWQLMVHHVITIFLLSSSWTINFVRVGTLILLSHDVSDVFLEGGKLVRYDAHNKNMTNFMFVLFFSSWVATRLIYYPFIVIRSAVTEAAALIQPDYILWDYQLSPPYAPRLIVFALILLFFLHIFWTFIILRIAYRTSTGGQAKDVRSDSDSDYDEEEMARRERTRLLKKKKNKVSPSTDDDDDEGEEEKNDRKARHRRAPRKE.

Transmembrane regions (helical) follow at residues 27 to 47, 92 to 112, 138 to 158, 165 to 185, 191 to 211, 225 to 245, and 275 to 295; these read FVDL…RILW, ILEC…GLYV, IWWY…GSTF, FWQL…SWTI, GTLI…GKLV, FVLF…FIVI, and LIVF…FIIL. The region spanning 90-303 is the TLC domain; the sequence is KKILECFWRF…ILRIAYRTST (214 aa). The tract at residues 306–368 is disordered; sequence QAKDVRSDSD…ARHRRAPRKE (63 aa). Residues 343-353 show a composition bias toward acidic residues; sequence TDDDDDEGEEE. Basic residues predominate over residues 357-368; that stretch reads RKARHRRAPRKE.

Belongs to the sphingosine N-acyltransferase family.

Its subcellular location is the membrane. The catalysed reaction is a very long-chain fatty acyl-CoA + a sphingoid base = an N-(very-long-chain fatty acyl)-sphingoid base + CoA + H(+). The enzyme catalyses 15-methylhexadecasphinganine + a fatty acyl-CoA = an N-acyl-15-methylhexadecasphinganine + CoA + H(+). It carries out the reaction a fatty acyl-CoA + sphinganine = an N-acylsphinganine + CoA + H(+). It catalyses the reaction sphinganine + tetradecanoyl-CoA = N-(tetradecanoyl)-sphinganine + CoA + H(+). The catalysed reaction is hexacosanoyl-CoA + sphinganine = N-hexacosanoylsphinganine + CoA + H(+). It participates in lipid metabolism; sphingolipid metabolism. In terms of biological role, catalyzes the acylation of sphingoid bases to form ceramides, which are key players in cell signaling events such as extending lifespan and enhancing stress resistance. C.elegans contain specific sphingoid bases, which are unique or different in structure compared to the sphingoid bases found in other animals. Two examples of these distinctive compounds are: 15-methylhexadecasphinganine and 15-methylhexadecasphing-4-enine. Exhibits substrate preference for fatty acyl-coA chains containing carbon chain length (C16-C18) and very long chains (24 carbons and more). The chain is Ceramide synthase hyl-1 (hyl-1) from Caenorhabditis elegans.